The primary structure comprises 340 residues: Pseudaminic acid synthase (340 aa).

The region spanning 281 to 337 (SLFVIKDIQKGEALTENNIKALRPNLGLHPKFYKEILGQKASKFLKANTPLSADDIE) is the AFP-like domain.

Belongs to the pseudaminic acid synthase family. A divalent metal cation serves as cofactor.

It carries out the reaction 2,4-diacetamido-2,4,6-trideoxy-beta-L-altrose + phosphoenolpyruvate + H2O = pseudaminate + phosphate. Its function is as follows. Catalyzes the fifth step in the biosynthesis of pseudaminic acid, a sialic-acid-like sugar that is used to modify flagellin. Catalyzes the condensation of phosphoenolpyruvate with 2,4-diacetamido-2,4,6-trideoxy-beta-l-altropyranose, forming pseudaminic acid. The polypeptide is Pseudaminic acid synthase (pseI) (Helicobacter pylori (strain ATCC 700392 / 26695) (Campylobacter pylori)).